Consider the following 600-residue polypeptide: MASSLGDNFNLLSPQQRELVKMLLDNGQDHLFRDWPNPGVDDDEKKAFFDQLVLLDSSYPGGLVAYINNAKRLLADSKAGNNPFDGFTPSVPTGETLKFGDENFNKYEEAGVREARRAAFVLVAGGLGERLGYNGIKVALPAETTTGTCFLQHYIESILALQEASSEGEGQTHIPFVIMTSDDTHGRTLDLLESNSYFGMQPTQVTLLKQEKVACLEDNDARLALDPQNRYRVQTKPHGHGDVHSLLHSSGILKVWYNAGLKWVLFFQDTNGLLFKAIPSALGVSSTKQYHVNSLAVPRKAKEAIGGITRLTHSDGRSMVINVEYNQLDPLLRASGYPDGDVNSETGYSPFPGNINQLILELGPYIEELAKTGGAIQEFVNPKYKDASKTSFKSSTRLECMMQDYPKTLPPSSRVGFTVMETWFAYAPVKNNAEDAAKVPKGNPYHSATSGEMAIYRANSLILKKAGFQVADPVLQVINGQEVEVWPRITWKPKWGLTFSLVKSKVSGNCSISQRSTLAIKGRKIFIENLSVDGALIVDAVDDAEVNVSGSVQNNGWALEPVDYKDSSEPEVLRIRGFKFNKVEQVEKKYSEPGKFDFKA.

It belongs to the USP family. The cofactor is Mg(2+). Requires Mn(2+) as cofactor. Post-translationally, the N-terminus is blocked.

The catalysed reaction is a monosaccharide 1-phosphate + UTP + H(+) = a UDP-monosaccharide + diphosphate. With respect to regulation, inhibited by a high concentration of pyrophosphate. In terms of biological role, may function as the terminal enzyme of the myo-inositol oxidation (MIO) pathway. May also play a role in the salvage pathway for synthesis of nucleotide sugars. This Pisum sativum (Garden pea) protein is UDP-sugar pyrophospharylase (USP).